The chain runs to 473 residues: GTPase Der (473 aa).

EngA-type G domains lie at 5 to 170 (PVVA…PEDV) and 178 to 351 (LKLA…ASSM). GTP contacts are provided by residues 11–18 (GRPNVGKS), 58–62 (DTGGI), 123–126 (NKID), 184–191 (GRPNVGKS), 231–235 (DTAGV), and 296–299 (NKWD). The KH-like domain occupies 352–436 (FKVSTNRLTQ…PLKVEFKLNT (85 aa)). The tract at residues 438 to 473 (PYAGKKTTSSKKLRPGVSEARQKRRNMKYKKGSHKK) is disordered. Residues 459–473 (QKRRNMKYKKGSHKK) are compositionally biased toward basic residues.

Belongs to the TRAFAC class TrmE-Era-EngA-EngB-Septin-like GTPase superfamily. EngA (Der) GTPase family. As to quaternary structure, associates with the 50S ribosomal subunit.

GTPase that plays an essential role in the late steps of ribosome biogenesis. In Psychrobacter sp. (strain PRwf-1), this protein is GTPase Der.